The chain runs to 349 residues: S-adenosylmethionine:tRNA ribosyltransferase-isomerase (349 aa).

The protein belongs to the QueA family. As to quaternary structure, monomer.

It localises to the cytoplasm. It carries out the reaction 7-aminomethyl-7-carbaguanosine(34) in tRNA + S-adenosyl-L-methionine = epoxyqueuosine(34) in tRNA + adenine + L-methionine + 2 H(+). It functions in the pathway tRNA modification; tRNA-queuosine biosynthesis. Its function is as follows. Transfers and isomerizes the ribose moiety from AdoMet to the 7-aminomethyl group of 7-deazaguanine (preQ1-tRNA) to give epoxyqueuosine (oQ-tRNA). In Pseudomonas putida (strain ATCC 700007 / DSM 6899 / JCM 31910 / BCRC 17059 / LMG 24140 / F1), this protein is S-adenosylmethionine:tRNA ribosyltransferase-isomerase.